A 364-amino-acid chain; its full sequence is MAHRFPALTSEQKKELSEIAQRIVANGKGILAADESVGTMGNRLQRIKVENTEENRRQFRELLFSVDNSISQSIGGVILFHETLYQKDSQGKLFRNILKEKGIVVGIKLDQGGAPLAGTNKETTIQGLDGLSERCAQYKKDGVDFGKWRAVLRISDQCPSSLAIQENANALARYASICQQNGLVPIVEPEVLPDGDHDLEHCQYVSEKVLAAVYKALNDHHVYLEGTLLKPNMLTAGHACTKKYTPEQVAMATVTALHRTVPAAVPSICFLSGGMSEEDATLNLNAIYRCPLPRPWKLSFSYGRALQASALAAWGGKAANKKATQEAFMKRAVANCQAAQGQYVHTGSSGAASTQSLFTASYTY.

Residue Ala2 is modified to N-acetylalanine. Lys13 is subject to N6-succinyllysine. Phosphoserine is present on Ser36. Thr39 carries the phosphothreonine modification. Residue Arg43 coordinates beta-D-fructose 1,6-bisphosphate. A Phosphoserine modification is found at Ser89. At Thr119 the chain carries Phosphothreonine. The residue at position 121 (Lys121) is an N6-succinyllysine. A Phosphoserine modification is found at Ser132. Residue Glu188 is the Proton acceptor of the active site. The active-site Schiff-base intermediate with dihydroxyacetone-P is the Lys230. 4 positions are modified to phosphoserine: Ser272, Ser276, Ser299, and Ser301. 272-274 serves as a coordination point for beta-D-fructose 1,6-bisphosphate; the sequence is SGG. Residue Arg304 coordinates beta-D-fructose 1,6-bisphosphate. Position 309 is a phosphoserine (Ser309). The residue at position 317 (Lys317) is an N6-succinyllysine.

Belongs to the class I fructose-bisphosphate aldolase family. As to quaternary structure, homotetramer. Interacts with BBS1, BBS2, BBS4 and BBS7. Forms a ternary complex with G6PD and TP53; this interaction is direct.

The protein localises to the cytoplasm. The protein resides in the cytosol. Its subcellular location is the cytoskeleton. It is found in the microtubule organizing center. It localises to the centrosome. The protein localises to the centriolar satellite. It catalyses the reaction beta-D-fructose 1,6-bisphosphate = D-glyceraldehyde 3-phosphate + dihydroxyacetone phosphate. The enzyme catalyses beta-D-fructose 1-phosphate = D-glyceraldehyde + dihydroxyacetone phosphate. It participates in carbohydrate degradation; glycolysis; D-glyceraldehyde 3-phosphate and glycerone phosphate from D-glucose: step 4/4. It functions in the pathway carbohydrate biosynthesis; gluconeogenesis. The protein operates within carbohydrate metabolism; fructose metabolism. Catalyzes the aldol cleavage of fructose 1,6-biphosphate to form two triosephosphates dihydroxyacetone phosphate and D-glyceraldehyde 3-phosphate in glycolysis as well as the reverse stereospecific aldol addition reaction in gluconeogenesis. In fructolysis, metabolizes fructose 1-phosphate derived from the phosphorylation of dietary fructose by fructokinase into dihydroxyacetone phosphate and D-glyceraldehyde. Acts as an adapter independently of its enzymatic activity, exerts a tumor suppressor role by stabilizing the ternary complex with G6PD and TP53 to inhibit G6PD activity and keep oxidative pentose phosphate metabolism in check. The sequence is that of Fructose-bisphosphate aldolase B (Aldob) from Rattus norvegicus (Rat).